Reading from the N-terminus, the 186-residue chain is Elongation factor P (186 aa).

Belongs to the elongation factor P family.

It localises to the cytoplasm. It functions in the pathway protein biosynthesis; polypeptide chain elongation. Functionally, involved in peptide bond synthesis. Stimulates efficient translation and peptide-bond synthesis on native or reconstituted 70S ribosomes in vitro. Probably functions indirectly by altering the affinity of the ribosome for aminoacyl-tRNA, thus increasing their reactivity as acceptors for peptidyl transferase. In Crocosphaera subtropica (strain ATCC 51142 / BH68) (Cyanothece sp. (strain ATCC 51142)), this protein is Elongation factor P.